The chain runs to 87 residues: Citrate lyase acyl carrier protein (87 aa).

An O-(phosphoribosyl dephospho-coenzyme A)serine modification is found at Ser-14.

It belongs to the CitD family. As to quaternary structure, oligomer with a subunit composition of (alpha,beta,gamma)6.

Its subcellular location is the cytoplasm. Its function is as follows. Covalent carrier of the coenzyme of citrate lyase. The protein is Citrate lyase acyl carrier protein of Treponema denticola (strain ATCC 35405 / DSM 14222 / CIP 103919 / JCM 8153 / KCTC 15104).